The sequence spans 3483 residues: Nonribosomal peptide synthetase Ao415 (3483 aa).

Residues 281–669 (TFKKLNETSN…DVHPLIKDVV (389 aa)) are adenylation 1. The Carrier 1 domain occupies 775 to 851 (EVFDELSTKI…GLRDHVSGKK (77 aa)). At Ser812 the chain carries O-(pantetheine 4'-phosphoryl)serine. Positions 886–1297 (ANVLPCSPMQ…YCLLHMLQNQ (412 aa)) are condensation 1. Residues 1363–1758 (TYRQFDDMGN…SADKDVAEIV (396 aa)) form an adenylation 2 region. The Carrier 2 domain maps to 1865–1941 (EELSETEKVI…SLAKALSSAN (77 aa)). An O-(pantetheine 4'-phosphoryl)serine modification is found at Ser1901. A condensation 2 region spans residues 1981 to 2379 (IKPCTPLQEG…LLKNPEQEVA (399 aa)). Positions 2412 to 2485 (TEAAVSIRRE…RMVVYLSSTK (74 aa)) constitute a Carrier 3 domain. Residue Ser2446 is modified to O-(pantetheine 4'-phosphoryl)serine. Residues 2520 to 2917 (ESILPTTPLQ…MLQKIIGNPL (398 aa)) are condensation 3. A Carrier 4 domain is found at 2954–3030 (DNYQNLERQV…KICLFLDKKQ (77 aa)). Position 2991 is an O-(pantetheine 4'-phosphoryl)serine (Ser2991). Residues 3084–3368 (SEGRIFLPTF…VQEDLLKIST (285 aa)) are condensation 4.

This sequence belongs to the NRP synthetase family.

The protein operates within siderophore biosynthesis. In terms of biological role, nonribosomal peptide synthetase; part of the gene cluster that mediates the biosynthesis of desferriferrichrome that chelates Fe(3+) to form ferrichrome. Fe(3+) is a key factor for induction of trap formation and the fungus uses the iron chelating desferriferrichrome to sequester Fe(3+) to inhibit trap formation and increase nematicidal activity. The biosynthesis of desferriferrichrome requires the action of the L-ornithine N(5)-oxygenase (LOO) Ao414 that hydroxylates L-ornithine at N(5), resulting in the formation of N(5)-hydroxyl-L-ornithine, which is subsequently N-acetylated to yield N(5)-acetyl-N(5)-hydroxy-L-ornithine (L-AHO). L-AHO harbors one hydroxamate moiety, which is the key core responsible for chelating iron. Then, L-AHO is further condensated with glycines to form desferriferrichrome through the NRPS protein Ao415. The chain is Nonribosomal peptide synthetase Ao415 from Arthrobotrys oligospora (strain ATCC 24927 / CBS 115.81 / DSM 1491) (Nematode-trapping fungus).